The primary structure comprises 313 residues: S-methyl-5'-thioadenosine phosphorylase (313 aa).

Phosphate contacts are provided by residues threonine 20, 68-69 (RH), and 101-102 (SA). Residue methionine 203 coordinates substrate. Serine 204 provides a ligand contact to phosphate. 227 to 229 (DYD) is a binding site for substrate.

It belongs to the PNP/MTAP phosphorylase family. MTAP subfamily. In terms of assembly, homotrimer.

It is found in the cytoplasm. It localises to the nucleus. It carries out the reaction S-methyl-5'-thioadenosine + phosphate = 5-(methylsulfanyl)-alpha-D-ribose 1-phosphate + adenine. Its pathway is amino-acid biosynthesis; L-methionine biosynthesis via salvage pathway; S-methyl-5-thio-alpha-D-ribose 1-phosphate from S-methyl-5'-thioadenosine (phosphorylase route): step 1/1. Its function is as follows. Catalyzes the reversible phosphorylation of S-methyl-5'-thioadenosine (MTA) to adenine and 5-methylthioribose-1-phosphate. Involved in the breakdown of MTA, a major by-product of polyamine biosynthesis. Responsible for the first step in the methionine salvage pathway after MTA has been generated from S-adenosylmethionine. Has broad substrate specificity with 6-aminopurine nucleosides as preferred substrates. This chain is S-methyl-5'-thioadenosine phosphorylase, found in Ajellomyces capsulatus (strain G186AR / H82 / ATCC MYA-2454 / RMSCC 2432) (Darling's disease fungus).